Reading from the N-terminus, the 189-residue chain is 3-hydroxyanthranilate 3,4-dioxygenase (189 aa).

Position 50 (R50) interacts with O2. Fe cation contacts are provided by H54, E60, and H102. E60 is a substrate binding site. 2 residues coordinate substrate: R106 and E116. Residues C131, C136, C170, and C173 each contribute to the a divalent metal cation site.

It belongs to the 3-HAO family. Fe(2+) is required as a cofactor.

It is found in the cytoplasm. It catalyses the reaction 3-hydroxyanthranilate + O2 = (2Z,4Z)-2-amino-3-carboxymuconate 6-semialdehyde. It participates in cofactor biosynthesis; NAD(+) biosynthesis; quinolinate from L-kynurenine: step 3/3. Catalyzes the oxidative ring opening of 3-hydroxyanthranilate to 2-amino-3-carboxymuconate semialdehyde, which spontaneously cyclizes to quinolinate. In Aspergillus niger (strain ATCC MYA-4892 / CBS 513.88 / FGSC A1513), this protein is 3-hydroxyanthranilate 3,4-dioxygenase (bna1).